A 1976-amino-acid chain; its full sequence is Protein TIC 214 (1976 aa).

The next 6 helical transmembrane spans lie at 11 to 31 (LLLL…YYGF), 64 to 84 (FIMG…HLAL), 87 to 107 (PHTL…FFWN), 126 to 146 (LSIQ…HFVL), 173 to 193 (FFGW…VLSW), and 221 to 241 (IFSI…PSPI). A compositionally biased stretch (acidic residues) spans 619-635 (FEEEEEEEEEDDQEEST). Disordered regions lie at residues 619 to 642 (FEEE…GIRS) and 830 to 861 (SSYV…EDKR). Positions 836-861 (GAKEKEKIEEEHEEEKGEYKRKEDKR) are enriched in basic and acidic residues. Transmembrane regions (helical) follow at residues 1054–1074 (IIKI…FFVL) and 1202–1222 (IYMS…QFFL). A compositionally biased stretch (basic and acidic residues) spans 1633–1665 (QKERFHPKPKVESNQKGYLELENRNRDEKERQH). Positions 1633-1669 (QKERFHPKPKVESNQKGYLELENRNRDEKERQHQGNL) are disordered.

The protein belongs to the TIC214 family. Part of the Tic complex.

It is found in the plastid. The protein localises to the chloroplast inner membrane. Functionally, involved in protein precursor import into chloroplasts. May be part of an intermediate translocation complex acting as a protein-conducting channel at the inner envelope. This chain is Protein TIC 214, found in Nymphaea alba (White water-lily).